Here is a 192-residue protein sequence, read N- to C-terminus: Ribosomal RNA small subunit methyltransferase G (192 aa).

Residues Gly63, Phe68, 112–113 (IE), and Arg125 contribute to the S-adenosyl-L-methionine site.

The protein belongs to the methyltransferase superfamily. RNA methyltransferase RsmG family.

It localises to the cytoplasm. It carries out the reaction guanosine(527) in 16S rRNA + S-adenosyl-L-methionine = N(7)-methylguanosine(527) in 16S rRNA + S-adenosyl-L-homocysteine. Specifically methylates the N7 position of guanine in position 527 of 16S rRNA. This Rickettsia felis (strain ATCC VR-1525 / URRWXCal2) (Rickettsia azadi) protein is Ribosomal RNA small subunit methyltransferase G.